A 108-amino-acid polypeptide reads, in one-letter code: MKTLLLTLVVVTIVCLDLAYTRKCYKTHPYKSEPCASGENLCYTKTWCDFRCSQLGKAVELGCAATCPTTKPYEEVTCCSTDDCNRFPNWERPRPRPRGLLSSIMDHP.

Positions 1–21 are cleaved as a signal peptide; that stretch reads MKTLLLTLVVVTIVCLDLAYT. Cystine bridges form between cysteine 24-cysteine 42, cysteine 35-cysteine 63, cysteine 48-cysteine 52, cysteine 67-cysteine 78, and cysteine 79-cysteine 84.

This sequence belongs to the three-finger toxin family. Long-chain subfamily. Type II alpha-neurotoxin sub-subfamily. Expressed by the venom gland.

It localises to the secreted. Binds with high affinity to muscular (alpha-1/CHRNA1) and neuronal (alpha-7/CHRNA7) nicotinic acetylcholine receptor (nAChR) and inhibits acetylcholine from binding to the receptor, thereby impairing neuromuscular and neuronal transmission. The chain is Long neurotoxin 13 from Drysdalia coronoides (White-lipped snake).